Reading from the N-terminus, the 120-residue chain is NAD(P)H-quinone oxidoreductase subunit 3 (120 aa).

3 helical membrane passes run 6–26, 64–84, and 89–109; these read GYDAFLGFLLISAAVPALALV, MFALVFVIFDVETVFLYPWAV, and LGLLAFIEALIFISILIVALA.

It belongs to the complex I subunit 3 family. NDH-1 can be composed of about 15 different subunits; different subcomplexes with different compositions have been identified which probably have different functions.

The protein localises to the cellular thylakoid membrane. It carries out the reaction a plastoquinone + NADH + (n+1) H(+)(in) = a plastoquinol + NAD(+) + n H(+)(out). The enzyme catalyses a plastoquinone + NADPH + (n+1) H(+)(in) = a plastoquinol + NADP(+) + n H(+)(out). Functionally, NDH-1 shuttles electrons from an unknown electron donor, via FMN and iron-sulfur (Fe-S) centers, to quinones in the respiratory and/or the photosynthetic chain. The immediate electron acceptor for the enzyme in this species is believed to be plastoquinone. Couples the redox reaction to proton translocation, and thus conserves the redox energy in a proton gradient. Cyanobacterial NDH-1 also plays a role in inorganic carbon-concentration. This Prochlorococcus marinus (strain SARG / CCMP1375 / SS120) protein is NAD(P)H-quinone oxidoreductase subunit 3.